The following is a 258-amino-acid chain: Imidazole glycerol phosphate synthase subunit HisF (258 aa).

Residues D11 and D130 contribute to the active site.

Belongs to the HisA/HisF family. In terms of assembly, heterodimer of HisH and HisF.

Its subcellular location is the cytoplasm. It catalyses the reaction 5-[(5-phospho-1-deoxy-D-ribulos-1-ylimino)methylamino]-1-(5-phospho-beta-D-ribosyl)imidazole-4-carboxamide + L-glutamine = D-erythro-1-(imidazol-4-yl)glycerol 3-phosphate + 5-amino-1-(5-phospho-beta-D-ribosyl)imidazole-4-carboxamide + L-glutamate + H(+). It participates in amino-acid biosynthesis; L-histidine biosynthesis; L-histidine from 5-phospho-alpha-D-ribose 1-diphosphate: step 5/9. In terms of biological role, IGPS catalyzes the conversion of PRFAR and glutamine to IGP, AICAR and glutamate. The HisF subunit catalyzes the cyclization activity that produces IGP and AICAR from PRFAR using the ammonia provided by the HisH subunit. The polypeptide is Imidazole glycerol phosphate synthase subunit HisF (Nitrobacter hamburgensis (strain DSM 10229 / NCIMB 13809 / X14)).